Here is a 246-residue protein sequence, read N- to C-terminus: UDP-N-acetyl-D-mannosaminuronic acid transferase (246 aa).

This sequence belongs to the glycosyltransferase 26 family.

The enzyme catalyses UDP-N-acetyl-alpha-D-mannosaminouronate + N-acetyl-alpha-D-glucosaminyl-di-trans,octa-cis-undecaprenyl diphosphate = beta-D-ManNAcA-(1-&gt;4)-alpha-D-GlcNAc-di-trans,octa-cis-undecaprenyl diphosphate + UDP + H(+). The protein operates within bacterial outer membrane biogenesis; enterobacterial common antigen biosynthesis. Catalyzes the synthesis of Und-PP-GlcNAc-ManNAcA (Lipid II), the second lipid-linked intermediate involved in enterobacterial common antigen (ECA) synthesis. The polypeptide is UDP-N-acetyl-D-mannosaminuronic acid transferase (Escherichia coli O127:H6 (strain E2348/69 / EPEC)).